Here is a 475-residue protein sequence, read N- to C-terminus: Sulfate adenylyltransferase subunit 1 (475 aa).

Residues 25 to 239 (KSLLRFLTCG…EVLETVEIQR (215 aa)) enclose the tr-type G domain. A G1 region spans residues 34–41 (GSVDDGKS). 34–41 (GSVDDGKS) contacts GTP. The interval 92-96 (GITID) is G2. Positions 113–116 (DTPG) are G3. GTP is bound by residues 113–117 (DTPGH) and 168–171 (NKMD). Positions 168-171 (NKMD) are G4. The interval 206 to 208 (SAL) is G5.

It belongs to the TRAFAC class translation factor GTPase superfamily. Classic translation factor GTPase family. CysN/NodQ subfamily. As to quaternary structure, heterodimer composed of CysD, the smaller subunit, and CysN.

The enzyme catalyses sulfate + ATP + H(+) = adenosine 5'-phosphosulfate + diphosphate. It participates in sulfur metabolism; hydrogen sulfide biosynthesis; sulfite from sulfate: step 1/3. In terms of biological role, with CysD forms the ATP sulfurylase (ATPS) that catalyzes the adenylation of sulfate producing adenosine 5'-phosphosulfate (APS) and diphosphate, the first enzymatic step in sulfur assimilation pathway. APS synthesis involves the formation of a high-energy phosphoric-sulfuric acid anhydride bond driven by GTP hydrolysis by CysN coupled to ATP hydrolysis by CysD. The polypeptide is Sulfate adenylyltransferase subunit 1 (Shigella sonnei (strain Ss046)).